The primary structure comprises 596 residues: MKNIRNFSIIAHIDHGKSTLADRIISECGAISDRLMSNQVMDTMDIEKERGITIKAQSVRLNYKFNNEEYVLNLIDTPGHVDFSYEVSRSLASCEGALLVVDASQGVEAQTIANVYIALENNLEIIPVINKIDLPSADIEKVKHEIEHIIGIDCSSAICVSAKTGVGIKELIETIITKIPAPKTNDEAPTKALIYDSWFDNYLGALALVRVYEGNIAKNEEVLIMSTDKRHIVQDLFYPHPLSPIKTKKLESGEVGVIVLGLKNVADVQVGDTITLTKNKAKEAIGGFEKAKAFVFAGLYPIETDKFEDLRDALDKLKLNDSSITYEPETSLALGFGFRVGFLGLLHMEVIKERLEREFNLDLIATAPTVTYEIYQTDGEILKIQNPSELPPVNKIDHIKEPYVKATIITPSEYLGNLITLLNRKRGMQVKMDYITPERVLLEYDIPLNEIVMDFYDKLKSLTKGYASFDYEPIEFRVGDLVKLDIKVAGENVDALSIIVPNEKALSKGRELVKAMKEIVPRQLFEVAIQASIGNKIIARENVKSMGKNVTAKCYGGDITRKRKLLEKQKEGKKRMKAIGKVHLPQEAFLSVLKID.

In terms of domain architecture, tr-type G spans 2-183 (KNIRNFSIIA…TIITKIPAPK (182 aa)). Residues 14-19 (DHGKST) and 130-133 (NKID) contribute to the GTP site.

This sequence belongs to the TRAFAC class translation factor GTPase superfamily. Classic translation factor GTPase family. LepA subfamily.

It is found in the cell inner membrane. It catalyses the reaction GTP + H2O = GDP + phosphate + H(+). Functionally, required for accurate and efficient protein synthesis under certain stress conditions. May act as a fidelity factor of the translation reaction, by catalyzing a one-codon backward translocation of tRNAs on improperly translocated ribosomes. Back-translocation proceeds from a post-translocation (POST) complex to a pre-translocation (PRE) complex, thus giving elongation factor G a second chance to translocate the tRNAs correctly. Binds to ribosomes in a GTP-dependent manner. This is Elongation factor 4 from Campylobacter lari (strain RM2100 / D67 / ATCC BAA-1060).